Here is a 434-residue protein sequence, read N- to C-terminus: Ribonuclease T2-like (434 aa).

An N-terminal signal peptide occupies residues 1 to 18; that stretch reads MLLKNLHSLLQLPIFSNG. Disulfide bonds link C27–C46, C35–C94, C45–C171, C102–C163, and C241–C277. N-linked (GlcNAc...) asparagine glycosylation is found at N37 and N70. Residue H87 is part of the active site. N103 and N123 each carry an N-linked (GlcNAc...) asparagine glycan. Catalysis depends on residues E156 and H160.

Belongs to the RNase T2 family. In terms of processing, N-glycosylated.

Its subcellular location is the vacuole lumen. The protein localises to the cytoplasm. It catalyses the reaction a ribonucleotidyl-ribonucleotide-RNA + H2O = a 3'-end 3'-phospho-ribonucleotide-RNA + a 5'-end dephospho-ribonucleoside-RNA + H(+). Rnase which modulates cell survival under stress conditions. Released from the vacuole to the cytoplasm during stress to promote tRNA and rRNA cleavage and to activate separately a downstream pathway that promotes cell death. Involved in cell size, vacuolar morphology and growth at high temperatures and high salt concentration. The protein is Ribonuclease T2-like (RNY1) of Saccharomyces cerevisiae (strain ATCC 204508 / S288c) (Baker's yeast).